A 157-amino-acid chain; its full sequence is Protein Smg homolog (157 aa).

This sequence belongs to the Smg family.

The sequence is that of Protein Smg homolog from Shewanella halifaxensis (strain HAW-EB4).